A 224-amino-acid chain; its full sequence is MFTILLYFLVLFWVTNAAVVTPSIENHKMENASVTISKVPISHRPRGFTAGSDSKKLAVQRFKLLISDFLSDAQLSKSIDVAAVGMHKGKSMDDILDDVYTRLRRTLSTKQISELAKAQKGLVEDLDEKSAKLVKARVKRMIVYSFDPAAEQIHKYATRPSMAFALIAETINERFVGSVKDLIRDVLTPKEYDIFRKHYHPHIFKLDNIGNNTEAVRTTTHETF.

Residues 1–17 (MFTILLYFLVLFWVTNA) form the signal peptide.

This is an uncharacterized protein from Caenorhabditis elegans.